Here is a 153-residue protein sequence, read N- to C-terminus: Phosphatase NudJ (153 aa).

A Nudix hydrolase domain is found at 3–131 (KPHVTVACVV…LVAESIRCYQ (129 aa)). Residues 36-57 (GHLEADETLVEAAARELWEETG) carry the Nudix box motif.

The protein belongs to the Nudix hydrolase family. NudJ subfamily. Monomer. Mg(2+) is required as a cofactor.

This chain is Phosphatase NudJ (nudJ), found in Escherichia coli O139:H28 (strain E24377A / ETEC).